The primary structure comprises 87 residues: Small ribosomal subunit protein bS20 (87 aa).

The protein belongs to the bacterial ribosomal protein bS20 family.

Its function is as follows. Binds directly to 16S ribosomal RNA. In Clostridium botulinum (strain Eklund 17B / Type B), this protein is Small ribosomal subunit protein bS20.